We begin with the raw amino-acid sequence, 195 residues long: MEVESKTSFGGMESKSKEVKVVTGGKLRPFDLVLRVVALALTLVAAVLLGVDKQTKVVSLQLLPTLPPMDVPVTAKWRYLSAFVYFVVSNAIACSYAALSLLLSVGNSKGNKGLGLAITVMDLVMVALLFSSNGAAGAIGLMGYEGNSRVRWGKVCNVFGKFCNQVAVALGLSFFGGLAFFLLVVMAAFALNKRH.

The Cytoplasmic segment spans residues M1–P29. The helical transmembrane segment at F30 to G50 threads the bilayer. Topologically, residues V51–A82 are extracellular. Residues F83–L103 traverse the membrane as a helical segment. Residues S104–D122 are Cytoplasmic-facing. A helical membrane pass occupies residues L123 to G143. Residues Y144–Q165 are Extracellular-facing. Residues V166 to M186 traverse the membrane as a helical segment. At A187–H195 the chain is on the cytoplasmic side.

This sequence belongs to the Casparian strip membrane proteins (CASP) family. Homodimer and heterodimers.

It localises to the cell membrane. This Vitis vinifera (Grape) protein is CASP-like protein 1E2.